Consider the following 117-residue polypeptide: MAYVRLACLAVIFFFAASVMFTVEAGIPCGESCVFIPCLTTVVGCSCKNKVCYNNHVIAAEANSIDDHHLLCQSHDDCIKKGTGNFCAPFLDHACQYGWCFRAESEGYLLKDFLKMP.

Residues 1-25 (MAYVRLACLAVIFFFAASVMFTVEA) form the signal peptide. A cross-link (cyclopeptide (Gly-Asn)) is located at residues 26 to 55 (GIPCGESCVFIPCLTTVVGCSCKNKVCYNN). 3 disulfide bridges follow: Cys-29/Cys-45, Cys-33/Cys-47, and Cys-38/Cys-52. Positions 56-117 (HVIAAEANSI…YLLKDFLKMP (62 aa)) are cleaved as a propeptide — removed in mature form.

Post-translationally, contains 3 disulfide bonds. This is a cyclic peptide. In terms of tissue distribution, expressed in seed but not in root, nodule, flower, stem, shoot, leaf and pod (at protein level).

Its function is as follows. Probably participates in a plant defense mechanism. The protein is Cliotide T9 of Clitoria ternatea (Butterfly pea).